The chain runs to 198 residues: Na(+)-translocating NADH-quinone reductase subunit E (198 aa).

A run of 6 helical transmembrane segments spans residues 11 to 31 (SIFI…FLAV), 39 to 59 (FGLG…NNLV), 77 to 97 (FLSF…LEMI), 110 to 130 (GIFL…SFMV), 140 to 160 (VVYG…LAGI), and 176 to 196 (LGIT…FSGV).

It belongs to the NqrDE/RnfAE family. In terms of assembly, composed of six subunits; NqrA, NqrB, NqrC, NqrD, NqrE and NqrF.

It is found in the cell inner membrane. It catalyses the reaction a ubiquinone + n Na(+)(in) + NADH + H(+) = a ubiquinol + n Na(+)(out) + NAD(+). Functionally, NQR complex catalyzes the reduction of ubiquinone-1 to ubiquinol by two successive reactions, coupled with the transport of Na(+) ions from the cytoplasm to the periplasm. NqrA to NqrE are probably involved in the second step, the conversion of ubisemiquinone to ubiquinol. The sequence is that of Na(+)-translocating NADH-quinone reductase subunit E from Aliivibrio fischeri (strain ATCC 700601 / ES114) (Vibrio fischeri).